A 148-amino-acid polypeptide reads, in one-letter code: Aspartate carbamoyltransferase regulatory chain (148 aa).

C106, C111, C134, and C137 together coordinate Zn(2+).

Belongs to the PyrI family. Contains catalytic and regulatory chains. Zn(2+) is required as a cofactor.

Functionally, involved in allosteric regulation of aspartate carbamoyltransferase. The sequence is that of Aspartate carbamoyltransferase regulatory chain from Methanococcus maripaludis (strain DSM 14266 / JCM 13030 / NBRC 101832 / S2 / LL).